Consider the following 599-residue polypeptide: Elongation factor 4 (599 aa).

The tr-type G domain occupies 2-184 (KNIRNFSIIA…RLVRDIPPPE (183 aa)). GTP contacts are provided by residues 14-19 (DHGKST) and 131-134 (NKID).

It belongs to the TRAFAC class translation factor GTPase superfamily. Classic translation factor GTPase family. LepA subfamily.

It is found in the cell inner membrane. The enzyme catalyses GTP + H2O = GDP + phosphate + H(+). In terms of biological role, required for accurate and efficient protein synthesis under certain stress conditions. May act as a fidelity factor of the translation reaction, by catalyzing a one-codon backward translocation of tRNAs on improperly translocated ribosomes. Back-translocation proceeds from a post-translocation (POST) complex to a pre-translocation (PRE) complex, thus giving elongation factor G a second chance to translocate the tRNAs correctly. Binds to ribosomes in a GTP-dependent manner. This chain is Elongation factor 4, found in Sodalis glossinidius (strain morsitans).